The sequence spans 511 residues: Sodium/proline symporter (511 aa).

The next 13 membrane-spanning stretches (helical) occupy residues 16–36 (WQTYVMIIVYFIILLIIGFYG), 54–74 (IGPYITALSAGASDMSGWMIM), 85–105 (LSAIWITIGLTLGAYINYFVV), 139–159 (IISGLIIVVFFTLYTHSGFVS), 175–195 (GLLIVAIIVIFYTFFGGYLAV), 199–219 (DFFQGVIMLIAMVMVPIVALL), 246–266 (VLGIVSLFSWGLGYFGQPHII), 284–304 (LGISWMAVGLLGAIGVGLTGI), 327–347 (ILFHPLVGGFLLAAILAAIMS), 381–401 (FVLIGRLSVLLVAIVAITIAW), 407–427 (ILNLVGNAWAGFGAAFSPLVL), 438–458 (AGAISGMVAGAVVVIVWISWI), and 467–487 (FFGMYEIIPGFIISVLITYIV).

Belongs to the sodium:solute symporter (SSF) (TC 2.A.21) family.

The protein localises to the cell membrane. It catalyses the reaction L-proline(in) + Na(+)(in) = L-proline(out) + Na(+)(out). Catalyzes the sodium-dependent uptake of extracellular L-proline. The chain is Sodium/proline symporter (putP) from Staphylococcus epidermidis (strain ATCC 12228 / FDA PCI 1200).